Consider the following 519-residue polypeptide: Importin subunit alpha-5 (519 aa).

One can recognise an IBB domain in the interval 1–58; sequence MSLRPSTKTEIRRIRYKVSVDAEEGRRRREDFLVEIRKSKRNENLMKKRRVKVLPPDY. 8 ARM repeats span residues 103-143, 146-185, 188-228, 230-269, 272-311, 314-354, 357-396, and 400-439; these read SPPT…NIAS, SEHT…NVAG, IQCR…NFFR, KPSP…NLSD, NENI…NIVS, SQQT…NITA, EEQI…NASV, and PNQI…MILI.

The protein belongs to the importin alpha family. As to quaternary structure, forms a complex with importin subunit beta-1.

The protein resides in the nucleus envelope. Binds to conventional NLS motifs and mediates nuclear protein import across the nuclear envelope. The polypeptide is Importin subunit alpha-5 (Arabidopsis thaliana (Mouse-ear cress)).